Reading from the N-terminus, the 86-residue chain is Colicin-E9 immunity protein (86 aa).

Belongs to the colicins ColE2/ColE8/ColE9 and pyocins S1/S2 family.

This protein is able to protect a cell, which harbors the plasmid ColE9 encoding colicin E9, against colicin E9, it binds specifically to the DNase-type colicin and inhibits its bactericidal activity. The polypeptide is Colicin-E9 immunity protein (imm) (Escherichia coli).